The primary structure comprises 372 residues: MHNQAPIQRRKSTRIYVGNVPIGDGAPIAVQSMTNTRTTDVEATVNQIKALERVGADIVRVSVPTMDAAEAFKLIKQQVNVPLVADIHFDYRIALKVAEYGVDCLRINPGNIGNEERIRMVVDCARDKNIPIRIGVNAGSLEKDLQEKYGEPTPQALLESAMRHVDHLDRLNFDQFKVSVKASDVFLAVESYRLLAKQIDQPLHLGITEAGGARSGAVKSAIGLGLLLSEGIGDTLRVSLAADPVEEIKVGFDILKSLRIRARGINFIACPTCSRQEFDVIGTVNALEQRLEDIITPMDVSIIGCVVNGPGEALVSTLGVTGGNKKSGLYEDGVRKDRLDNDDMIAQLESRIRAKASQLDEARRIDVLQVEK.

[4Fe-4S] cluster is bound by residues C270, C273, C305, and E312.

This sequence belongs to the IspG family. Requires [4Fe-4S] cluster as cofactor.

It carries out the reaction (2E)-4-hydroxy-3-methylbut-2-enyl diphosphate + oxidized [flavodoxin] + H2O + 2 H(+) = 2-C-methyl-D-erythritol 2,4-cyclic diphosphate + reduced [flavodoxin]. Its pathway is isoprenoid biosynthesis; isopentenyl diphosphate biosynthesis via DXP pathway; isopentenyl diphosphate from 1-deoxy-D-xylulose 5-phosphate: step 5/6. In terms of biological role, converts 2C-methyl-D-erythritol 2,4-cyclodiphosphate (ME-2,4cPP) into 1-hydroxy-2-methyl-2-(E)-butenyl 4-diphosphate. This chain is 4-hydroxy-3-methylbut-2-en-1-yl diphosphate synthase (flavodoxin), found in Salmonella choleraesuis (strain SC-B67).